The following is a 700-amino-acid chain: Elongation factor G (700 aa).

Residues 10 to 286 (TKVRNIGIMA…AVVDYLPSPL (277 aa)) form the tr-type G domain. Residues 19–26 (AHIDAGKT), 83–87 (DTPGH), and 137–140 (NKMD) contribute to the GTP site.

The protein belongs to the TRAFAC class translation factor GTPase superfamily. Classic translation factor GTPase family. EF-G/EF-2 subfamily.

It localises to the cytoplasm. Functionally, catalyzes the GTP-dependent ribosomal translocation step during translation elongation. During this step, the ribosome changes from the pre-translocational (PRE) to the post-translocational (POST) state as the newly formed A-site-bound peptidyl-tRNA and P-site-bound deacylated tRNA move to the P and E sites, respectively. Catalyzes the coordinated movement of the two tRNA molecules, the mRNA and conformational changes in the ribosome. In Saccharopolyspora erythraea (strain ATCC 11635 / DSM 40517 / JCM 4748 / NBRC 13426 / NCIMB 8594 / NRRL 2338), this protein is Elongation factor G.